The chain runs to 80 residues: Clavanin-D (80 aa).

The N-terminal stretch at 1-19 (MKTTILILLILGLGINAKS) is a signal peptide. Positions 20–29 (LEERKSEEEK) are excised as a propeptide. Phenylalanine amide is present on F52. The propeptide occupies 54–80 (DDQQDNGKFYGHYAEDNGKHWYDTGDQ).

Hemocytes and pharyngeal tissues.

The protein localises to the secreted. Its function is as follows. Has antimicrobial activity against E.coli, L.monocytogenes and C.albicans. This chain is Clavanin-D, found in Styela clava (Sea squirt).